We begin with the raw amino-acid sequence, 520 residues long: Catalase easC (520 aa).

The active site involves His-71. Tyr-361 is a binding site for heme.

The protein belongs to the catalase family. Requires heme as cofactor.

Its pathway is alkaloid biosynthesis; ergot alkaloid biosynthesis. In terms of biological role, catalase; part of the gene cluster that mediates the biosynthesis of fumiclavanine C, a fungal ergot alkaloid. DmaW catalyzes the first step of ergot alkaloid biosynthesis by condensing dimethylallyl diphosphate (DMAP) and tryptophan to form 4-dimethylallyl-L-tryptophan. The second step is catalyzed by the methyltransferase easF that methylates 4-dimethylallyl-L-tryptophan in the presence of S-adenosyl-L-methionine, resulting in the formation of 4-dimethylallyl-L-abrine. The catalase easC and the FAD-dependent oxidoreductase easE then transform 4-dimethylallyl-L-abrine to chanoclavine-I which is further oxidized by EasD in the presence of NAD(+), resulting in the formation of chanoclavine-I aldehyde. EasA reduces chanoclavine-I aldehyde to dihydrochanoclavine-I aldehyde that spontaneously dehydrates to form 6,8-dimethyl-6,7-didehydroergoline. EasG then catalyzes the reduction of 6,8-dimethyl-6,7-didehydroergoline to form festuclavine. Hydrolysis of festuclavine by easM then leads to the formation of fumigaclavine B which is in turn acetylated by easN to fumigaclavine A. Finally, easL catalyzes the conversion of fumigaclavine A into fumigaclavine C by attaching a dimethylallyl moiety to C-2 of the indole nucleus. In Aspergillus fumigatus (strain ATCC MYA-4609 / CBS 101355 / FGSC A1100 / Af293) (Neosartorya fumigata), this protein is Catalase easC.